A 251-amino-acid polypeptide reads, in one-letter code: Flap endonuclease Xni (251 aa).

Residue aspartate 104 coordinates Mg(2+). A 5'-3' exonuclease domain is found at 160 to 249; sequence VLPRQLPDYW…IDGNLQQLRL (90 aa). 5 residues coordinate K(+): leucine 171, alanine 172, proline 180, valine 182, and isoleucine 185. Positions 184–189 are interaction with DNA; sequence GIGPKS.

Belongs to the Xni family. It depends on Mg(2+) as a cofactor. K(+) serves as cofactor.

Functionally, has flap endonuclease activity. During DNA replication, flap endonucleases cleave the 5'-overhanging flap structure that is generated by displacement synthesis when DNA polymerase encounters the 5'-end of a downstream Okazaki fragment. The protein is Flap endonuclease Xni of Salmonella schwarzengrund (strain CVM19633).